The sequence spans 308 residues: Ribonuclease Z (308 aa).

The Zn(2+) site is built by histidine 63, histidine 65, aspartate 67, histidine 68, histidine 140, aspartate 211, and histidine 269. The active-site Proton acceptor is the aspartate 67.

The protein belongs to the RNase Z family. As to quaternary structure, homodimer. Zn(2+) serves as cofactor.

It catalyses the reaction Endonucleolytic cleavage of RNA, removing extra 3' nucleotides from tRNA precursor, generating 3' termini of tRNAs. A 3'-hydroxy group is left at the tRNA terminus and a 5'-phosphoryl group is left at the trailer molecule.. In terms of biological role, zinc phosphodiesterase, which displays some tRNA 3'-processing endonuclease activity. Probably involved in tRNA maturation, by removing a 3'-trailer from precursor tRNA. This chain is Ribonuclease Z, found in Bacillus velezensis (strain DSM 23117 / BGSC 10A6 / LMG 26770 / FZB42) (Bacillus amyloliquefaciens subsp. plantarum).